Here is a 65-residue protein sequence, read N- to C-terminus: 7 kDa A-type inclusion protein (65 aa).

Residues 1-20 show a composition bias toward polar residues; that stretch reads MSNQNIPQLSEYQTSVSQVA. A disordered region spans residues 1–32; it reads MSNQNIPQLSEYQTSVSQVAVTPPPKPKTPQI.

The sequence is that of 7 kDa A-type inclusion protein from Bos taurus (Bovine).